Here is a 492-residue protein sequence, read N- to C-terminus: 1-aminocyclopropane-1-carboxylate synthase 1 (492 aa).

Position 277 is an N6-(pyridoxal phosphate)lysine (Lys277).

The protein belongs to the class-I pyridoxal-phosphate-dependent aminotransferase family. As to quaternary structure, homodimer. Requires pyridoxal 5'-phosphate as cofactor.

It carries out the reaction S-adenosyl-L-methionine = 1-aminocyclopropane-1-carboxylate + S-methyl-5'-thioadenosine + H(+). It functions in the pathway alkene biosynthesis; ethylene biosynthesis via S-adenosyl-L-methionine; ethylene from S-adenosyl-L-methionine: step 1/2. In terms of biological role, catalyzes the formation of 1-aminocyclopropane-1-carboxylate, a direct precursor of ethylene in higher plants. The chain is 1-aminocyclopropane-1-carboxylate synthase 1 (ACS1) from Prunus mume (Japanese apricot).